Here is a 214-residue protein sequence, read N- to C-terminus: tRNA (guanine-N(7)-)-methyltransferase (214 aa).

4 residues coordinate S-adenosyl-L-methionine: Glu44, Glu69, Asp96, and Asp118. Residue Asp118 is part of the active site. Substrate-binding positions include Lys122, Asp154, and Thr191 to Glu194.

It belongs to the class I-like SAM-binding methyltransferase superfamily. TrmB family.

It catalyses the reaction guanosine(46) in tRNA + S-adenosyl-L-methionine = N(7)-methylguanosine(46) in tRNA + S-adenosyl-L-homocysteine. The protein operates within tRNA modification; N(7)-methylguanine-tRNA biosynthesis. In terms of biological role, catalyzes the formation of N(7)-methylguanine at position 46 (m7G46) in tRNA. In Listeria monocytogenes serotype 4b (strain F2365), this protein is tRNA (guanine-N(7)-)-methyltransferase.